We begin with the raw amino-acid sequence, 1102 residues long: Probable ubiquitin-conjugating enzyme E2 23 (1102 aa).

Disordered stretches follow at residues 1–20 (MEHE…DSSV), 25–111 (ASLS…DGNY), 396–418 (LPKV…PVHE), 579–602 (SPGN…SHQE), 661–710 (DESV…DIYA), and 760–800 (QAES…KNIL). Residues 31-44 (DSEHPNIYRQDIVK) are compositionally biased toward basic and acidic residues. Residues 59–88 (GDSDSDSDISDEEEDDDDDEDNDDDDEDVE) are compositionally biased toward acidic residues. Positions 579-596 (SPGNSFEEATQQDNGYQD) are enriched in polar residues. Residues 779-800 (SKVNVTDNCESKGTQANAKNIL) show a composition bias toward polar residues. The 161-residue stretch at 850-1010 (QWFKKVDQDW…TFLLNCKTMM (161 aa)) folds into the UBC core domain. The active-site Glycyl thioester intermediate is C936.

The protein belongs to the ubiquitin-conjugating enzyme family.

The catalysed reaction is S-ubiquitinyl-[E1 ubiquitin-activating enzyme]-L-cysteine + [E2 ubiquitin-conjugating enzyme]-L-cysteine = [E1 ubiquitin-activating enzyme]-L-cysteine + S-ubiquitinyl-[E2 ubiquitin-conjugating enzyme]-L-cysteine.. It participates in protein modification; protein ubiquitination. In terms of biological role, accepts the ubiquitin from the E1 complex and catalyzes its covalent attachment to other proteins. The polypeptide is Probable ubiquitin-conjugating enzyme E2 23 (UBC23) (Arabidopsis thaliana (Mouse-ear cress)).